A 534-amino-acid polypeptide reads, in one-letter code: EH domain-containing protein 1 (534 aa).

Position 1 is an N-acetylmethionine (M1). The region spanning 55-286 is the Dynamin-type G domain; that stretch reads FDNKPMVLLV…DLFKDIQSLP (232 aa). Positions 65 to 72 are G1 motif; the sequence is GQYSTGKT. 65 to 72 is a binding site for ATP; the sequence is GQYSTGKT. A G2 motif region spans residues 91 to 92; the sequence is EP. The tract at residues 153 to 156 is G3 motif; the sequence is DTPG. A coiled-coil region spans residues 198-227; sequence DEFSEVIKALKNHEDKIRVVLNKADQIETQ. Positions 219–222 are G4 motif; that stretch reads NKAD. ATP is bound at residue K220. Residue I243 is a region of interest, G5 motif. Residue W258 participates in ATP binding. Phosphoserine occurs at positions 355 and 456. In terms of domain architecture, EH spans 444-532; the sequence is DKPTYDEIFY…PHLVPPSKRR (89 aa). The region spanning 476–511 is the EF-hand domain; the sequence is LPNTVLGKIWKLADVDKDGLLDDEEFALANHLIKVK. D489, D491, D493, and E500 together coordinate Ca(2+).

The protein belongs to the TRAFAC class dynamin-like GTPase superfamily. Dynamin/Fzo/YdjA family. EHD subfamily. As to quaternary structure, homooligomer, and heterooligomer with EHD2, EHD3 and EHD4, ATP-binding is required for heterooligomerization. Interacts (via EH domain) with MICALL1 (via NPF1 motif); the interaction is direct and recruits EHD1 to membranes. Interacts with RAB35; the interaction is indirect through MICALL1 and recruits EHD1 to membranes. Interacts (via EH domain) with PACSIN2 (via NPF motifs); regulates localization to tubular recycling endosome membranes. Interacts with PACSIN1. Interacts with RAB8A. Interacts with FER1L5 (via second C2 domain). Interacts with MYOF. Interacts with ZFYVE20. Interacts (via EH domain) with RAB11FIP2.

It localises to the recycling endosome membrane. The protein resides in the early endosome membrane. The protein localises to the cell membrane. Its subcellular location is the cell projection. It is found in the cilium membrane. Its function is as follows. ATP- and membrane-binding protein that controls membrane reorganization/tubulation upon ATP hydrolysis. Acts in early endocytic membrane fusion and membrane trafficking of recycling endosomes. Recruited to endosomal membranes upon nerve growth factor stimulation, indirectly regulates neurite outgrowth. Plays a role in myoblast fusion. Involved in the unidirectional retrograde dendritic transport of endocytosed BACE1 and in efficient sorting of BACE1 to axons implicating a function in neuronal APP processing. Plays a role in the formation of the ciliary vesicle (CV), an early step in cilium biogenesis. Proposed to be required for the fusion of distal appendage vesicles (DAVs) to form the CV by recruiting SNARE complex component SNAP29. Is required for recruitment of transition zone proteins CEP290, RPGRIP1L, TMEM67 and B9D2, and of IFT20 following DAV reorganization before Rab8-dependent ciliary membrane extension. Required for the loss of CCP110 form the mother centriole essential for the maturation of the basal body during ciliogenesis. This chain is EH domain-containing protein 1, found in Pongo abelii (Sumatran orangutan).